Consider the following 189-residue polypeptide: Large ribosomal subunit protein uL6 (189 aa).

Belongs to the universal ribosomal protein uL6 family. In terms of assembly, part of the 50S ribosomal subunit.

This protein binds to the 23S rRNA, and is important in its secondary structure. It is located near the subunit interface in the base of the L7/L12 stalk, and near the tRNA binding site of the peptidyltransferase center. The protein is Large ribosomal subunit protein uL6 of Bacteroides fragilis (strain ATCC 25285 / DSM 2151 / CCUG 4856 / JCM 11019 / LMG 10263 / NCTC 9343 / Onslow / VPI 2553 / EN-2).